Consider the following 156-residue polypeptide: 6,7-dimethyl-8-ribityllumazine synthase (156 aa).

5-amino-6-(D-ribitylamino)uracil-binding positions include phenylalanine 22, 57–59, and 81–83; these read AVE and CVI. 86–87 contributes to the (2S)-2-hydroxy-3-oxobutyl phosphate binding site; sequence GT. Residue histidine 89 is the Proton donor of the active site. A 5-amino-6-(D-ribitylamino)uracil-binding site is contributed by phenylalanine 114. Arginine 128 provides a ligand contact to (2S)-2-hydroxy-3-oxobutyl phosphate.

The protein belongs to the DMRL synthase family. In terms of assembly, forms an icosahedral capsid composed of 60 subunits, arranged as a dodecamer of pentamers.

It carries out the reaction (2S)-2-hydroxy-3-oxobutyl phosphate + 5-amino-6-(D-ribitylamino)uracil = 6,7-dimethyl-8-(1-D-ribityl)lumazine + phosphate + 2 H2O + H(+). Its pathway is cofactor biosynthesis; riboflavin biosynthesis; riboflavin from 2-hydroxy-3-oxobutyl phosphate and 5-amino-6-(D-ribitylamino)uracil: step 1/2. Its function is as follows. Catalyzes the formation of 6,7-dimethyl-8-ribityllumazine by condensation of 5-amino-6-(D-ribitylamino)uracil with 3,4-dihydroxy-2-butanone 4-phosphate. This is the penultimate step in the biosynthesis of riboflavin. The polypeptide is 6,7-dimethyl-8-ribityllumazine synthase (Vibrio cholerae serotype O1 (strain ATCC 39315 / El Tor Inaba N16961)).